Here is a 254-residue protein sequence, read N- to C-terminus: NH(3)-dependent NAD(+) synthetase (254 aa).

32–39 (GISGGIDS) lines the ATP pocket. Aspartate 38 serves as a coordination point for Mg(2+). A deamido-NAD(+)-binding site is contributed by arginine 113. Threonine 133 lines the ATP pocket. A Mg(2+)-binding site is contributed by glutamate 138. 2 residues coordinate deamido-NAD(+): lysine 146 and aspartate 153. ATP-binding residues include lysine 162 and threonine 184. 244–245 (HK) lines the deamido-NAD(+) pocket.

Belongs to the NAD synthetase family. In terms of assembly, homodimer.

The catalysed reaction is deamido-NAD(+) + NH4(+) + ATP = AMP + diphosphate + NAD(+) + H(+). The protein operates within cofactor biosynthesis; NAD(+) biosynthesis; NAD(+) from deamido-NAD(+) (ammonia route): step 1/1. Its function is as follows. Catalyzes the ATP-dependent amidation of deamido-NAD to form NAD. Uses ammonia as a nitrogen source. This is NH(3)-dependent NAD(+) synthetase from Thermococcus kodakarensis (strain ATCC BAA-918 / JCM 12380 / KOD1) (Pyrococcus kodakaraensis (strain KOD1)).